We begin with the raw amino-acid sequence, 258 residues long: Ribosomal RNA small subunit methyltransferase J (258 aa).

S-adenosyl-L-methionine contacts are provided by residues 106–107 (RD), 122–123 (ER), and Asp181.

The protein belongs to the methyltransferase superfamily. RsmJ family.

The protein resides in the cytoplasm. It carries out the reaction guanosine(1516) in 16S rRNA + S-adenosyl-L-methionine = N(2)-methylguanosine(1516) in 16S rRNA + S-adenosyl-L-homocysteine + H(+). Functionally, specifically methylates the guanosine in position 1516 of 16S rRNA. The sequence is that of Ribosomal RNA small subunit methyltransferase J from Pseudoalteromonas atlantica (strain T6c / ATCC BAA-1087).